Consider the following 113-residue polypeptide: Endoribonuclease SymE (113 aa).

Residues Ser29–Pro74 enclose the SpoVT-AbrB domain.

It belongs to the SymE family.

Its subcellular location is the cytoplasm. Functionally, involved in the degradation and recycling of damaged RNA. It is itself a target for degradation by the ATP-dependent protease Lon. The polypeptide is Endoribonuclease SymE (Escherichia coli (strain 55989 / EAEC)).